The sequence spans 173 residues: MAKFQPKVQSEGQDDGLREKMIAVNRVTKVVKGGRILGFAALTVVGDGDGRVGMGKGKSKEVPAAVQKAMEEARRNMVKVSLKNGTIHHNVTGHHGAAVVMMAPAPKGTGIIAGGPMRAVFEVMGITDIVAKSHGSSNPYNMVRATFDALTNSTTPAEVAAKRGKTVEDLFAA.

The S5 DRBM domain occupies 17–80 (LREKMIAVNR…EEARRNMVKV (64 aa)).

This sequence belongs to the universal ribosomal protein uS5 family. Part of the 30S ribosomal subunit. Contacts proteins S4 and S8.

Its function is as follows. With S4 and S12 plays an important role in translational accuracy. Located at the back of the 30S subunit body where it stabilizes the conformation of the head with respect to the body. The sequence is that of Small ribosomal subunit protein uS5 from Acidovorax sp. (strain JS42).